A 418-amino-acid polypeptide reads, in one-letter code: MTNSIEQAWDLAKQRFAAVGVDVDAALTRLDTLPVSMHCWQGDDVTGFEDPDGVLTGGIQATGNYPGKARNATELRSDLELALALIPGPKRLNLHAIYLESDTPVARNKIEPRHFSHWVAWAKKHQLGLDFNPSCFSHPLSADGFTLSHADPEIRQFWIEHCQASRRVSAYFGEQLGTPSVMNIWIPDGMKDTPIDRLAPRQRLLSALDEVISEKLNPAHHIDAVESKLFGIGAESYTVGSNEFYMGYAASRQTALCLDAGHFHPTEVISDKISSAMLYVPRLLLHVSRPVRWDSDHVVLLDDETQAIASEIIRHNLFDRVHIGLDFFDASINRIAAWVIGTRNMKKALLRALLEPTDRLRQLELRGDYTARLALLEEQKSLPWQAIWEGYCQRNDVPVDARWLDAVREYEQQILSQR.

Positions 262, 294, and 296 each coordinate Mn(2+).

It belongs to the rhamnose isomerase family. In terms of assembly, homotetramer. Mn(2+) is required as a cofactor.

The protein localises to the cytoplasm. It carries out the reaction L-rhamnopyranose = L-rhamnulose. The protein operates within carbohydrate degradation; L-rhamnose degradation; glycerone phosphate from L-rhamnose: step 1/3. Catalyzes the interconversion of L-rhamnose and L-rhamnulose. The protein is L-rhamnose isomerase of Yersinia pestis bv. Antiqua (strain Antiqua).